Consider the following 1338-residue polypeptide: Vascular endothelial growth factor receptor 1 (1338 aa).

The first 26 residues, 1 to 26 (MVSYWDTGVLLCALLSCLLLTGSSSG), serve as a signal peptide directing secretion. Residues 27 to 758 (SKLKDPELSL…QGTSDKSNLE (732 aa)) lie on the Extracellular side of the membrane. Ig-like C2-type domains follow at residues 32–123 (PELS…TESA), 151–214 (GREL…VNGH), 230–327 (IDVQ…TSVH), 335–421 (TVKH…LTAT), 428–553 (PQIY…FYIT), 556–654 (PNGF…KEIT), and 661–747 (PYLL…AYLT). Cystine bridges form between Cys-53–Cys-107 and Cys-158–Cys-207. N-linked (GlcNAc...) asparagine glycans are attached at residues Asn-100, Asn-164, Asn-196, and Asn-251. An intrachain disulfide couples Cys-252 to Cys-311. Asn-323, Asn-402, Asn-417, Asn-474, Asn-547, Asn-597, Asn-620, Asn-625, and Asn-666 each carry an N-linked (GlcNAc...) asparagine glycan. Cysteines 454 and 535 form a disulfide. Cys-577 and Cys-636 form a disulfide bridge. Cys-682 and Cys-731 are joined by a disulfide. The helical transmembrane segment at 759–780 (LITLTCTCVAATLFWLLLTLFI) threads the bilayer. The Cytoplasmic portion of the chain corresponds to 781–1338 (RKMKRSSSEI…SVVLYSTPPI (558 aa)). The Protein kinase domain occupies 827–1158 (LKLGKSLGRG…ELVEKLGDLL (332 aa)). ATP-binding positions include 833 to 841 (LGRGAFGKV) and Lys-861. Tyr-914 carries the phosphotyrosine; by autocatalysis modification. Over residues 940-957 (PKKEKMEPGLEQGKKPRL) the composition is skewed to basic and acidic residues. The disordered stretch occupies residues 940–982 (PKKEKMEPGLEQGKKPRLDSVTSSESFASSGFQEDKSLSDVEE). The segment covering 959–971 (SVTSSESFASSGF) has biased composition (polar residues). Residue Asp-1022 is the Proton acceptor of the active site. Phosphotyrosine; by autocatalysis occurs at positions 1053, 1169, 1213, 1242, 1309, 1327, and 1333.

Belongs to the protein kinase superfamily. Tyr protein kinase family. CSF-1/PDGF receptor subfamily. As to quaternary structure, interacts with VEGFA, VEGFB and PGF. Monomer in the absence of bound VEGFA, VEGFB or PGF. Homodimer in the presence of bound VEGFA, VEGFB and PGF. Can also form a heterodimer with KDR. Interacts (when tyrosine phosphorylated) with CBL, CRK, GRB2, NCK1, PIK3R1, PLCG, PSEN1 and PTPN11. Probably also interacts with PTPRB. Interacts with RACK1. Identified in a complex with CBL and CD2AP. Post-translationally, N-glycosylated. In terms of processing, ubiquitinated after VEGFA-mediated autophosphorylation, leading to proteolytic degradation. Autophosphorylated on tyrosine residues upon ligand binding. Autophosphorylation occurs in trans, i.e. one subunit of the dimeric receptor phosphorylates tyrosine residues on the other subunit. Phosphorylation at Tyr-1169 is important for interaction with PLCG. Phosphorylation at Tyr-1213 is important for interaction with PIK3R1, PTPN11, GRB2, and PLCG. Phosphorylation at Tyr-1333 is important for endocytosis and for interaction with CBL, NCK1 and CRK. Is probably dephosphorylated by PTPRB. In terms of tissue distribution, detected in normal lung, but also in placenta, liver, kidney, heart and brain tissues. Specifically expressed in most of the vascular endothelial cells, and also expressed in peripheral blood monocytes. Isoform 2 is strongly expressed in placenta. Isoform 3 is expressed in corneal epithelial cells (at protein level). Isoform 3 is expressed in vascular smooth muscle cells (VSMC).

The protein localises to the cell membrane. It is found in the endosome. The protein resides in the secreted. It localises to the cytoplasm. The catalysed reaction is L-tyrosyl-[protein] + ATP = O-phospho-L-tyrosyl-[protein] + ADP + H(+). Present in an inactive conformation in the absence of bound ligand. Binding of VEGFA, VEGFB or PGF leads to dimerization and activation by autophosphorylation on tyrosine residues. In terms of biological role, tyrosine-protein kinase that acts as a cell-surface receptor for VEGFA, VEGFB and PGF, and plays an essential role in the development of embryonic vasculature, the regulation of angiogenesis, cell survival, cell migration, macrophage function, chemotaxis, and cancer cell invasion. Acts as a positive regulator of postnatal retinal hyaloid vessel regression. May play an essential role as a negative regulator of embryonic angiogenesis by inhibiting excessive proliferation of endothelial cells. Can promote endothelial cell proliferation, survival and angiogenesis in adulthood. Its function in promoting cell proliferation seems to be cell-type specific. Promotes PGF-mediated proliferation of endothelial cells, proliferation of some types of cancer cells, but does not promote proliferation of normal fibroblasts (in vitro). Has very high affinity for VEGFA and relatively low protein kinase activity; may function as a negative regulator of VEGFA signaling by limiting the amount of free VEGFA and preventing its binding to KDR. Modulates KDR signaling by forming heterodimers with KDR. Ligand binding leads to the activation of several signaling cascades. Activation of PLCG leads to the production of the cellular signaling molecules diacylglycerol and inositol 1,4,5-trisphosphate and the activation of protein kinase C. Mediates phosphorylation of PIK3R1, the regulatory subunit of phosphatidylinositol 3-kinase, leading to activation of phosphatidylinositol kinase and the downstream signaling pathway. Mediates activation of MAPK1/ERK2, MAPK3/ERK1 and the MAP kinase signaling pathway, as well as of the AKT1 signaling pathway. Phosphorylates SRC and YES1, and may also phosphorylate CBL. Promotes phosphorylation of AKT1 at 'Ser-473'. Promotes phosphorylation of PTK2/FAK1. Phosphorylates PLCG. Functionally, may function as decoy receptor for VEGFA. Its function is as follows. Has a truncated kinase domain; it increases phosphorylation of SRC at 'Tyr-418' by unknown means and promotes tumor cell invasion. This is Vascular endothelial growth factor receptor 1 (FLT1) from Homo sapiens (Human).